The chain runs to 324 residues: Germ cell-specific gene 1 protein (324 aa).

4 helical membrane-spanning segments follow: residues 15-35, 127-147, 164-184, and 208-228; these read TFISAILNMLSLGLSTASLLS, LSLGAQTAYIGLQLISFLLLL, AFAAVSLVLSGLLGMVAHMLY, and WAFYTAWVSFTCCMASAVTTF.

It belongs to the GSG1 family. In terms of assembly, interacts with PAPOLB. Expressed in spermatogenic cells (at protein level). Expressed in germ cells within the testis from day 21 onwards.

The protein resides in the endoplasmic reticulum membrane. Functionally, may cause the redistribution of PAPOLB from the cytosol to the endoplasmic reticulum. The polypeptide is Germ cell-specific gene 1 protein (Gsg1) (Mus musculus (Mouse)).